We begin with the raw amino-acid sequence, 234 residues long: Opacity protein V28 (234 aa).

Residue Ala-1 is a signal peptide.

This sequence belongs to the opacity porin family.

The protein resides in the cell outer membrane. Functionally, implicated in a number of adherence functions. OPA proteins are implicated in pathogenesis and are subject to phase variation. The protein is Opacity protein V28 of Neisseria gonorrhoeae.